Consider the following 153-residue polypeptide: NADPH-dependent 7-cyano-7-deazaguanine reductase (153 aa).

The interval Met-1–Pro-22 is disordered. Cys-51 functions as the Thioimide intermediate in the catalytic mechanism. Asp-58 functions as the Proton donor in the catalytic mechanism. Substrate is bound by residues Val-73–Ser-75 and His-92–Glu-93.

The protein belongs to the GTP cyclohydrolase I family. QueF type 1 subfamily.

It is found in the cytoplasm. It carries out the reaction 7-aminomethyl-7-carbaguanine + 2 NADP(+) = 7-cyano-7-deazaguanine + 2 NADPH + 3 H(+). It participates in tRNA modification; tRNA-queuosine biosynthesis. In terms of biological role, catalyzes the NADPH-dependent reduction of 7-cyano-7-deazaguanine (preQ0) to 7-aminomethyl-7-deazaguanine (preQ1). The sequence is that of NADPH-dependent 7-cyano-7-deazaguanine reductase from Maricaulis maris (strain MCS10) (Caulobacter maris).